A 92-amino-acid chain; its full sequence is C-C motif chemokine 4 (92 aa).

The signal sequence occupies residues 1–23 (MKLCVSALSLLLLVAAFCAPGFS). Cystine bridges form between cysteine 34–cysteine 58 and cysteine 35–cysteine 74.

Belongs to the intercrine beta (chemokine CC) family. Homodimer.

It is found in the secreted. Functionally, monokine with inflammatory and chemokinetic properties. This Mus musculus (Mouse) protein is C-C motif chemokine 4 (Ccl4).